The chain runs to 898 residues: Tight junction protein ZO-3 (898 aa).

Residues 11–93 (TATLCRDPRR…LANITVKRPR (83 aa)) enclose the PDZ 1 domain. Positions 98–165 (PATKAGTSGR…SPGGNSEANG (68 aa)) are disordered. 5 positions are modified to phosphoserine: serine 128, serine 156, serine 161, serine 195, and serine 313. A PDZ 2 domain is found at 187–264 (SVLVRRTESE…KLTLLVLRDR (78 aa)). The tract at residues 295-368 (LSQAVPSHVP…QSAEDRGYSP (74 aa)) is disordered. Residues 312–349 (RSLDSDGTDSPRDSPPLRRENSLDSRTISEPDAPRHSS) show a composition bias toward basic and acidic residues. The residue at position 319 (threonine 319) is a Phosphothreonine. 2 positions are modified to phosphoserine: serine 321 and serine 360. One can recognise a PDZ 3 domain in the interval 369 to 435 (DSRVVRFHKG…LTREEAVQFL (67 aa)). The region spanning 464 to 538 (GDSFYIRTHF…PNQSRAEQLA (75 aa)) is the SH3 domain. A Guanylate kinase-like domain is found at 569 to 750 (LRRGAKKSTQ…WYQELKAVVR (182 aa)). Serine 580 is modified (phosphoserine). Residues 759-898 (TAEDQLDNSS…GYDWGPATDL (140 aa)) are disordered. Acidic residues predominate over residues 762-772 (DQLDNSSEDNL). Positions 780–790 (ADSSADLSCDS) are enriched in low complexity. The segment covering 796–814 (YETDGEGYTDGEGYTDVDE) has biased composition (acidic residues). Basic and acidic residues predominate over residues 831–841 (EEPRSPRDHGR). 3 positions are modified to phosphoserine: serine 835, serine 884, and serine 885.

It belongs to the MAGUK family. In terms of assembly, heterodimer with TJP1. Interacts with UBN1. Interacts with occludin OCLN and claudins. Interacts with PATJ. Interacts with FASLG. Interacts with CCND1. Post-translationally, phosphorylated.

Its subcellular location is the cell membrane. It is found in the cell junction. It localises to the tight junction. The protein localises to the nucleus. Functionally, TJP1, TJP2, and TJP3 are closely related scaffolding proteins that link tight junction (TJ) transmembrane proteins such as claudins, junctional adhesion molecules, and occludin to the actin cytoskeleton. The tight junction acts to limit movement of substances through the paracellular space and as a boundary between the compositionally distinct apical and basolateral plasma membrane domains of epithelial and endothelial cells. Binds and recruits PATJ to tight junctions where it connects and stabilizes apical and lateral components of tight junctions. Promotes cell-cycle progression through the sequestration of cyclin D1 (CCND1) at tight junctions during mitosis which prevents CCND1 degradation during M-phase and enables S-phase transition. With TJP1 and TJP2, participates in the junctional retention and stability of the transcription factor DBPA, but is not involved in its shuttling to the nucleus. Contrary to TJP2, TJP3 is dispensable for individual viability, embryonic development, epithelial differentiation, and the establishment of TJs, at least in the laboratory environment. The protein is Tight junction protein ZO-3 (TJP3) of Canis lupus familiaris (Dog).